The primary structure comprises 295 residues: Tyrosine recombinase XerD (295 aa).

One can recognise a Core-binding (CB) domain in the interval 1–85; sequence METIIEEYLR…TIRSFHQFAI (85 aa). The region spanning 106–289 is the Tyr recombinase domain; sequence KLPDVLNVDE…SKSQIRKMYN (184 aa). Catalysis depends on residues Arg-146, Lys-170, His-241, Arg-244, and His-267. Tyr-276 acts as the O-(3'-phospho-DNA)-tyrosine intermediate in catalysis.

This sequence belongs to the 'phage' integrase family. XerD subfamily. In terms of assembly, forms a cyclic heterotetrameric complex composed of two molecules of XerC and two molecules of XerD.

It localises to the cytoplasm. Functionally, site-specific tyrosine recombinase, which acts by catalyzing the cutting and rejoining of the recombining DNA molecules. The XerC-XerD complex is essential to convert dimers of the bacterial chromosome into monomers to permit their segregation at cell division. It also contributes to the segregational stability of plasmids. The sequence is that of Tyrosine recombinase XerD from Staphylococcus aureus (strain COL).